The primary structure comprises 124 residues: Putative calmodulin-3 (124 aa).

EF-hand domains lie at 1-18 (GCITTKELGTVMRSLGQN), 19-54 (PTEAELQDMINEVDADGNGTIDFPEFLNLMARKIKD), 56-91 (DFEEELKEAFRVFDKDRNGFISAAELPHVMTNLGEK), and 92-124 (LTDEEVDEIIREADVDCDGQINYDEFVKVMMAK). Ca(2+) is bound by residues Cys2, Glu7, Asp32, Asp34, Asn36, Thr38, Glu43, Asp69, Asp71, Asn73, and Glu80. The residue at position 91 (Lys91) is an N6,N6,N6-trimethyllysine. Ca(2+)-binding residues include Asp105, Asp107, Asp109, Gln111, and Glu116.

Belongs to the calmodulin family. In terms of tissue distribution, not detected in the organs tested.

Functionally, calmodulin mediates the control of a large number of enzymes, ion channels and other proteins by Ca(2+). Among the enzymes to be stimulated by the calmodulin-Ca(2+) complex are a number of protein kinases and phosphatases. The chain is Putative calmodulin-3 (PCM3) from Solanum tuberosum (Potato).